A 217-amino-acid polypeptide reads, in one-letter code: RING-H2 finger protein ATL70 (217 aa).

A helical membrane pass occupies residues Ile-61 to Ile-81. Residues Cys-147–Arg-189 form an RING-type; atypical zinc finger.

The protein belongs to the RING-type zinc finger family. ATL subfamily.

It is found in the membrane. It catalyses the reaction S-ubiquitinyl-[E2 ubiquitin-conjugating enzyme]-L-cysteine + [acceptor protein]-L-lysine = [E2 ubiquitin-conjugating enzyme]-L-cysteine + N(6)-ubiquitinyl-[acceptor protein]-L-lysine.. It functions in the pathway protein modification; protein ubiquitination. This is RING-H2 finger protein ATL70 (ATL70) from Arabidopsis thaliana (Mouse-ear cress).